The following is a 1254-amino-acid chain: Vitamin B12-dependent ribonucleotide reductase (1254 aa).

Substrate-binding positions include serine 153, 198-199, glycine 230, 474-478, and 675-679; these read AC, NPCSE, and PTGTI. Cysteine 199 and cysteine 487 are oxidised to a cystine. The Proton acceptor role is filled by asparagine 474. Catalysis depends on cysteine 476, which acts as the Cysteine radical intermediate. Residue glutamate 478 is the Proton acceptor of the active site.

Belongs to the ribonucleoside diphosphate reductase class-2 family. It depends on adenosylcob(III)alamin as a cofactor.

It carries out the reaction a 2'-deoxyribonucleoside 5'-diphosphate + [thioredoxin]-disulfide + H2O = a ribonucleoside 5'-diphosphate + [thioredoxin]-dithiol. Catalyzes the reduction of ribonucleotides to deoxyribonucleotides. May function to provide a pool of deoxyribonucleotide precursors for DNA repair during oxygen limitation and/or for immediate growth after restoration of oxygen. The protein is Vitamin B12-dependent ribonucleotide reductase (nrdJ) of Bradyrhizobium diazoefficiens (strain JCM 10833 / BCRC 13528 / IAM 13628 / NBRC 14792 / USDA 110).